The sequence spans 221 residues: MNWSIPNILTVLRLLAAPGVAVMFLYFHRPWADWFALTLFILAAVTDFFDGYLARLWKQESKFGAMLDPIADKAMVVIALVIITGYSGMNPWLILPVTLILFREVFVSGLREFLGAKASLLKVTKLAKWKTTAQMVAIAILFLGTGLEHLEGIARQGMTWEQYARAVSAGEADPIRSCGMHGCSSYATWLGLALIWIAAALTFITGWDYFRKALPYLKDEK.

The next 5 membrane-spanning stretches (helical) occupy residues 8–28 (ILTVLRLLAAPGVAVMFLYFH), 34–54 (WFALTLFILAAVTDFFDGYLA), 75–95 (MVVIALVIITGYSGMNPWLIL), 133–153 (AQMVAIAILFLGTGLEHLEGI), and 187–207 (ATWLGLALIWIAAALTFITGW).

It belongs to the CDP-alcohol phosphatidyltransferase class-I family.

The protein localises to the cell membrane. It catalyses the reaction a CDP-1,2-diacyl-sn-glycerol + sn-glycerol 3-phosphate = a 1,2-diacyl-sn-glycero-3-phospho-(1'-sn-glycero-3'-phosphate) + CMP + H(+). It functions in the pathway phospholipid metabolism; phosphatidylglycerol biosynthesis; phosphatidylglycerol from CDP-diacylglycerol: step 1/2. This protein catalyzes the committed step to the synthesis of the acidic phospholipids. The protein is CDP-diacylglycerol--glycerol-3-phosphate 3-phosphatidyltransferase (pgsA) of Cereibacter sphaeroides (strain ATCC 17023 / DSM 158 / JCM 6121 / CCUG 31486 / LMG 2827 / NBRC 12203 / NCIMB 8253 / ATH 2.4.1.) (Rhodobacter sphaeroides).